We begin with the raw amino-acid sequence, 142 residues long: Hemoglobin subunit alpha (142 aa).

At S1 the chain carries N-acetylserine. Positions 1–142 constitute a Globin domain; sequence SLSEKNKAAV…VALALADRYR (142 aa). H59 is a binding site for O2. Residue H88 coordinates heme b.

This sequence belongs to the globin family. Heterotetramer of two alpha chains and two beta chains. Red blood cells.

Involved in oxygen transport from gills to the various peripheral tissues. This is Hemoglobin subunit alpha (hba) from Pagothenia borchgrevinki (Bald rockcod).